The chain runs to 443 residues: Cobyrinate a,c-diamide synthase (443 aa).

One can recognise a GATase cobBQ-type domain in the interval 244 to 435 (KVSVAMDSAF…AHIHFLSNPR (192 aa)). Catalysis depends on cysteine 327, which acts as the Nucleophile.

This sequence belongs to the CobB/CbiA family. The cofactor is Mg(2+).

The enzyme catalyses cob(II)yrinate + 2 L-glutamine + 2 ATP + 2 H2O = cob(II)yrinate a,c diamide + 2 L-glutamate + 2 ADP + 2 phosphate + 2 H(+). The protein operates within cofactor biosynthesis; adenosylcobalamin biosynthesis; cob(II)yrinate a,c-diamide from sirohydrochlorin (anaerobic route): step 10/10. Functionally, catalyzes the ATP-dependent amidation of the two carboxylate groups at positions a and c of cobyrinate, using either L-glutamine or ammonia as the nitrogen source. The polypeptide is Cobyrinate a,c-diamide synthase (Thermoplasma acidophilum (strain ATCC 25905 / DSM 1728 / JCM 9062 / NBRC 15155 / AMRC-C165)).